The primary structure comprises 239 residues: Uridylate kinase (239 aa).

ATP is bound at residue 10 to 13 (KLSG). Gly-52 provides a ligand contact to UMP. Positions 53 and 57 each coordinate ATP. UMP contacts are provided by residues Asp-72 and 133-140 (TGNPFFTT). Residues Thr-160, Tyr-166, and Asp-169 each contribute to the ATP site.

This sequence belongs to the UMP kinase family. In terms of assembly, homohexamer.

The protein localises to the cytoplasm. The enzyme catalyses UMP + ATP = UDP + ADP. The protein operates within pyrimidine metabolism; CTP biosynthesis via de novo pathway; UDP from UMP (UMPK route): step 1/1. Its activity is regulated as follows. Inhibited by UTP. In terms of biological role, catalyzes the reversible phosphorylation of UMP to UDP. This Porphyromonas gingivalis (strain ATCC BAA-308 / W83) protein is Uridylate kinase.